The chain runs to 90 residues: MPALEITIINKLGLHARAAAKFVGVAGRYPCQVRVGRNPESCVDGKSIMAVMMLAAGKGTNLHLHTEGEQEDEALNALVELINNRFDEGE.

One can recognise an HPr domain in the interval 1–89; the sequence is MPALEITIIN…ELINNRFDEG (89 aa). The active-site Pros-phosphohistidine intermediate is His-15.

The protein belongs to the HPr family.

The protein localises to the cytoplasm. In terms of biological role, general (non sugar-specific) component of the phosphoenolpyruvate-dependent sugar phosphotransferase system (sugar PTS). This major carbohydrate active-transport system catalyzes the phosphorylation of incoming sugar substrates concomitantly with their translocation across the cell membrane. The phosphoryl group from phosphoenolpyruvate (PEP) is transferred to the phosphoryl carrier protein HPr by enzyme I. Phospho-HPr then transfers it to the PTS EIIA domain. This chain is Phosphocarrier protein HPr (ptsH), found in Pseudomonas aeruginosa (strain ATCC 15692 / DSM 22644 / CIP 104116 / JCM 14847 / LMG 12228 / 1C / PRS 101 / PAO1).